Consider the following 255-residue polypeptide: Undecaprenyl-diphosphatase (255 aa).

Transmembrane regions (helical) follow at residues 1-21 (MDII…FLPI), 75-95 (IIIS…IVYQ), 96-116 (LFTV…FLIV), 174-194 (TEFS…FDIV), 203-223 (GDIS…LITI), and 234-254 (NFVP…MFFV).

The protein belongs to the UppP family.

It is found in the cell membrane. It carries out the reaction di-trans,octa-cis-undecaprenyl diphosphate + H2O = di-trans,octa-cis-undecaprenyl phosphate + phosphate + H(+). Its function is as follows. Catalyzes the dephosphorylation of undecaprenyl diphosphate (UPP). The chain is Undecaprenyl-diphosphatase from Methanococcus aeolicus (strain ATCC BAA-1280 / DSM 17508 / OCM 812 / Nankai-3).